A 342-amino-acid chain; its full sequence is Alpha-(1,3)-fucosyltransferase 7 (342 aa).

Over 1-11 (MQNAGLSPTPS) the chain is Cytoplasmic. A helical; Signal-anchor for type II membrane protein membrane pass occupies residues 12–31 (LRALGGLAMAALLSTVWLWW). At 32–342 (RLGAAPGGAP…YQDLEGWFQA (311 aa)) the chain is on the extracellular side. An intrachain disulfide couples C68 to C76. The N-linked (GlcNAc...) asparagine glycan is linked to N81. C211 and C214 are disulfide-bonded. N-linked (GlcNAc...) asparagine glycosylation is present at N291. A disulfide bridge links C318 with C321.

Belongs to the glycosyltransferase 10 family. N-glycosylated. In terms of tissue distribution, expressed in thymus, spleen, liver and lung. Highly expressed in the thymus and lower expressed in the lung.

The protein resides in the membrane. It catalyses the reaction an N-acetyl-alpha-neuraminyl-(2-&gt;3)-beta-D-galactosyl-(1-&gt;4)-N-acetyl-beta-D-glucosaminyl derivative + GDP-beta-L-fucose = an alpha-Neu5Ac-(2-&gt;3)-beta-D-Gal-(1-&gt;4)-[alpha-L-Fuc-(1-&gt;3)]-beta-D-GlcNAc derivative + GDP + H(+). It carries out the reaction a neolactoside IV(3)-alpha-NeuAc-nLc4Cer + GDP-beta-L-fucose = a neolactoside IV(3)-alpha-NeuNAc,III(3)-alpha-Fuc-nLc4Cer + GDP + H(+). The enzyme catalyses a neolactoside VI(3)-alpha-NeuNAc-nLc6Cer + GDP-beta-L-fucose = a neolactoside VI(3)-alpha-NeuAc,V(3)-alphaFuc-nLc6Cer + GDP + H(+). The catalysed reaction is an alpha-Neu5Ac-(2-&gt;3)-beta-D-Gal-(1-&gt;4)-beta-D-GlcNAc-(1-&gt;3)-beta-D-Gal-(1-&gt;4)-[alpha-L-Fuc-(1-&gt;3)]-beta-D-GlcNAc derivative + GDP-beta-L-fucose = an alpha-Neu5Ac-(2-&gt;3)-beta-D-Gal-(1-&gt;4)-[alpha-L-Fuc-(1-&gt;3)]-beta-D-GlcNAc-(1-&gt;3)-beta-D-Gal-(1-&gt;4)-[alpha-L-Fuc-(1-&gt;3)]-beta-D-GlcNAc derivative + GDP + H(+). It catalyses the reaction an alpha-Neu5Ac-(2-&gt;3)-beta-D-Gal-(1-&gt;4)-beta-D-GlcNAc6S derivative + GDP-beta-L-fucose = an alpha-Neu5Ac-(2-&gt;3)-beta-D-Gal-(1-&gt;4)-[alpha-L-Fuc-(1-&gt;3)]-beta-D-GlcNAc6S derivative + GDP + H(+). It carries out the reaction alpha-Neu5Ac-(2-&gt;3)-beta-D-Gal-(1-&gt;4)-beta-D-GlcNAc-(1-&gt;3)-beta-D-Gal-(1-&gt;4)-D-Glc + GDP-beta-L-fucose = alpha-Neu5Ac-(2-&gt;3)-beta-D-Gal-(1-&gt;4)-[alpha-L-Fuc-(1-&gt;3)]-beta-D-GlcNAc-(1-&gt;3)-beta-D-Gal-(1-&gt;4)-D-Glc + GDP + H(+). The enzyme catalyses alpha-Neu5Ac-(2-&gt;3)-beta-D-Gal-(1-&gt;4)-beta-D-GlcNAc-(1-&gt;3)-beta-D-Gal-(1-&gt;4)-[alpha-L-Fuc-(1-&gt;3)]-beta-D-GlcNAc-(1-&gt;3)-beta-D-Gal-(1-&gt;4)-beta-D-GlcNAc + GDP-beta-L-fucose = alpha-Neu5Ac-(2-&gt;3)-beta-D-Gal-(1-&gt;4)-[alpha-L-Fuc-(1-&gt;3)]-beta-D-GlcNAc-(1-&gt;3)-beta-D-Gal-(1-&gt;4)-[alpha-L-Fuc-(1-&gt;3)]-beta-D-GlcNAc-(1-&gt;3)-beta-D-Gal-(1-&gt;4)-beta-D-GlcNAc + GDP + H(+). The catalysed reaction is alpha-Neu5Ac-(2-&gt;3)-beta-D-Gal-(1-&gt;4)-beta-D-GlcNAc-(1-&gt;3)-beta-D-Gal-(1-&gt;4)-beta-D-GlcNAc-(1-&gt;3)-beta-D-Gal-(1-&gt;4)-beta-D-GlcNAc + GDP-beta-L-fucose = alpha-Neu5Ac-(2-&gt;3)-beta-D-Gal-(1-&gt;4)-[alpha-L-Fuc-(1-&gt;3)]-beta-D-GlcNAc-(1-&gt;3)-beta-D-Gal-(1-&gt;4)-beta-D-GlcNAc-(1-&gt;3)-beta-D-Gal-(1-&gt;4)-beta-D-GlcNAc + GDP + H(+). The protein operates within protein modification; protein glycosylation. Inhibited by NaCl. Inhibited by GDP in a concentration dependent manner, with an IC(50) value of 93 uM. Also inhibited by GMP and GTP. Inhibited by N-ethylmaleimide. Activated by poly(ethylene glycol) by enhancing the thermal stability of FUT7. Activated by Mn2+, Ca2+, and Mg2+. Both panosialin A and B inhibit activity with IC(50) values of 4.8 and 5.3 ug/ml, respectively. Inhibited by gallic acid (GA) and (-)-epigallocatechin gallate (EGCG) in a time-dependent and irreversible manner with IC(50) values of 60 and 700 nM, respectively. Its function is as follows. Catalyzes the transfer of L-fucose, from a guanosine diphosphate-beta-L-fucose, to the N-acetyl glucosamine (GlcNAc) of a distal alpha2,3 sialylated lactosamine unit of a glycoprotein or a glycolipid-linked sialopolylactosamines chain through an alpha-1,3 glycosidic linkage and participates in the final fucosylation step in the biosynthesis of the sialyl Lewis X (sLe(x)), a carbohydrate involved in cell and matrix adhesion during leukocyte trafficking and fertilization. In vitro, also synthesizes sialyl-dimeric-Lex structures, from VIM-2 structures and both di-fucosylated and trifucosylated structures from mono-fucosylated precursors. However does not catalyze alpha 1-3 fucosylation when an internal alpha 1-3 fucosylation is present in polylactosamine chain and the fucosylation rate of the internal GlcNAc residues is reduced once fucose has been added to the distal GlcNAc. Also catalyzes the transfer of a fucose from GDP-beta-fucose to the 6-sulfated a(2,3)sialylated substrate to produce 6-sulfo sLex mediating significant L-selectin-dependent cell adhesion. Through sialyl-Lewis(x) biosynthesis, can control SELE- and SELP-mediated cell adhesion with leukocytes and allows leukocytes tethering and rolling along the endothelial tissue thereby enabling the leukocytes to accumulate at a site of inflammation. May enhance embryo implantation through sialyl Lewis X (sLeX)-mediated adhesion of embryo cells to endometrium. May affect insulin signaling by up-regulating the phosphorylation and expression of some signaling molecules involved in the insulin-signaling pathway through SLe(x) which is present on the glycans of the INSRR alpha subunit. The polypeptide is Alpha-(1,3)-fucosyltransferase 7 (Bos taurus (Bovine)).